Here is a 233-residue protein sequence, read N- to C-terminus: Orotidine 5'-phosphate decarboxylase (233 aa).

Substrate is bound by residues Asp-11, Lys-34, 61–70 (DLKLHDIPNT), Thr-117, Arg-179, Gln-188, Gly-208, and Arg-209. Lys-63 acts as the Proton donor in catalysis.

The protein belongs to the OMP decarboxylase family. Type 1 subfamily. In terms of assembly, homodimer.

The enzyme catalyses orotidine 5'-phosphate + H(+) = UMP + CO2. Its pathway is pyrimidine metabolism; UMP biosynthesis via de novo pathway; UMP from orotate: step 2/2. In terms of biological role, catalyzes the decarboxylation of orotidine 5'-monophosphate (OMP) to uridine 5'-monophosphate (UMP). The chain is Orotidine 5'-phosphate decarboxylase from Streptococcus pneumoniae serotype 4 (strain ATCC BAA-334 / TIGR4).